The following is a 253-amino-acid chain: Phycobilisome rod-core linker polypeptide CpcG4 (253 aa).

Residues 11-191 (SSQNHRVTSF…DFQEKAGTVQ (181 aa)) form the PBS-linker domain.

It belongs to the phycobilisome linker protein family. Part of the phycobilisome, a hemidiscoidal structure that is composed of two distinct substructures: a core complex and a number of rods radiating from the core.

Its subcellular location is the cellular thylakoid membrane. In terms of biological role, rod-core linker protein required for attachment of phycocyanin to allophycocyanin in cores of phycobilisomes. Its function is as follows. Linker polypeptides determine the state of aggregation and the location of the disk-shaped phycobiliprotein units within the phycobilisome and modulate their spectroscopic properties in order to mediate a directed and optimal energy transfer. This Nostoc sp. (strain PCC 7120 / SAG 25.82 / UTEX 2576) protein is Phycobilisome rod-core linker polypeptide CpcG4.